The following is a 101-amino-acid chain: Omega-scoloptoxin(10)-Ssd1b (101 aa).

The first 23 residues, 1 to 23, serve as a signal peptide directing secretion; the sequence is MNKLTIIFFTILLLTYIIVEKEA.

Post-translationally, contains 3 disulfide bonds. As to expression, expressed by the venom gland.

Its subcellular location is the secreted. Voltage-gated calcium channel inhibitor. The chain is Omega-scoloptoxin(10)-Ssd1b from Scolopendra dehaani (Thai centipede).